Here is a 368-residue protein sequence, read N- to C-terminus: Chorismate synthase (368 aa).

Residues arginine 48 and arginine 54 each contribute to the NADP(+) site. FMN is bound by residues 125-127, 238-239, glycine 278, 293-297, and arginine 319; these read RSS, NA, and KPTSS.

The protein belongs to the chorismate synthase family. As to quaternary structure, homotetramer. FMNH2 is required as a cofactor.

The enzyme catalyses 5-O-(1-carboxyvinyl)-3-phosphoshikimate = chorismate + phosphate. Its pathway is metabolic intermediate biosynthesis; chorismate biosynthesis; chorismate from D-erythrose 4-phosphate and phosphoenolpyruvate: step 7/7. Catalyzes the anti-1,4-elimination of the C-3 phosphate and the C-6 proR hydrogen from 5-enolpyruvylshikimate-3-phosphate (EPSP) to yield chorismate, which is the branch point compound that serves as the starting substrate for the three terminal pathways of aromatic amino acid biosynthesis. This reaction introduces a second double bond into the aromatic ring system. The protein is Chorismate synthase of Methylibium petroleiphilum (strain ATCC BAA-1232 / LMG 22953 / PM1).